A 326-amino-acid polypeptide reads, in one-letter code: MVFSNSNASVSLFRLVALVATLSHLVFTFVDAHGYVTFPASRAYMCKQGQAKNCGEIQYEPQSVEAPKGLPFARKGDGQLCSAGLGQFSQLDRQGPSAWPTTKASGVHSFSWTFTAQHATTDFKYFITKANWDSSKTSGLSASDLESDPFLTVSMNGKAPPRTMNHDLSKAMPSRSGYHVVYAVWTVDNTANAFYQCLDLDFGGGNSSSSSSSSNSSATSTTGSSSAASAATSSTTSSSVSESGTASTASGSGSDDDSSSSGDSSNGSSSDNNGGSSGSTTMPKSQIAQSGACRMKKRRRSPNASVLAARGDYRRHKSQMRRDRQG.

Residues M1 to A32 form the signal peptide. H33 and H118 together coordinate Cu(2+). Residues H33–L200 enclose the Chitin-binding type-4 domain. The cysteines at positions 81 and 197 are disulfide-linked. Residues N206, N215, N266, and N303 are each glycosylated (N-linked (GlcNAc...) asparagine). The segment at N206–G326 is disordered. Residues S207–T281 are compositionally biased toward low complexity.

It belongs to the polysaccharide monooxygenase AA10 family. Cu(2+) is required as a cofactor.

The protein localises to the secreted. Its function is as follows. Lytic polysaccharide monooxygenase (LPMO) that oxidatively cleaves alpha- and beta-chitin with C1 regioselectivity. Catalysis by LPMOs requires the reduction of the active-site copper from Cu(II) to Cu(I) by a reducing agent and H(2)O(2) or O(2) as a cosubstrate. Exhibits enzymatic activity on U.maydis fungal cell wall chitin and Boosts chitin hydrolysis by chitinase GH18A. This Mycosarcoma maydis (Corn smut fungus) protein is AA10 family lytic polysaccharide monooxygenase C.